Reading from the N-terminus, the 125-residue chain is L-fucose mutarotase (125 aa).

The active-site Proton donor is His-13.

The protein belongs to the RbsD / FucU family. FucU mutarotase subfamily.

The enzyme catalyses alpha-L-fucose = beta-L-fucose. Active toward L-galactopyranoside and D-arabinopyranoside but no D-fucopyranoside activity detected. Its function is as follows. Plays a role in the catabolism of L-fucose. Involved in the anomeric conversion of L-fucose. This is L-fucose mutarotase from Xanthomonas campestris pv. campestris (strain ATCC 33913 / DSM 3586 / NCPPB 528 / LMG 568 / P 25).